A 219-amino-acid polypeptide reads, in one-letter code: 2-C-methyl-D-erythritol 4-phosphate cytidylyltransferase (219 aa).

Belongs to the IspD/TarI cytidylyltransferase family. IspD subfamily.

It catalyses the reaction 2-C-methyl-D-erythritol 4-phosphate + CTP + H(+) = 4-CDP-2-C-methyl-D-erythritol + diphosphate. It functions in the pathway isoprenoid biosynthesis; isopentenyl diphosphate biosynthesis via DXP pathway; isopentenyl diphosphate from 1-deoxy-D-xylulose 5-phosphate: step 2/6. In terms of biological role, catalyzes the formation of 4-diphosphocytidyl-2-C-methyl-D-erythritol from CTP and 2-C-methyl-D-erythritol 4-phosphate (MEP). This Bacteroides fragilis (strain ATCC 25285 / DSM 2151 / CCUG 4856 / JCM 11019 / LMG 10263 / NCTC 9343 / Onslow / VPI 2553 / EN-2) protein is 2-C-methyl-D-erythritol 4-phosphate cytidylyltransferase.